The sequence spans 442 residues: uncharacterized protein (442 aa).

A disordered region spans residues 211 to 269 (LDYSTDKPEDSESEDIELEDSESEDSESEDIDQHGGQGPDDDEFNANFDDPQFDEFDFG). Positions 221-240 (SESEDIELEDSESEDSESED) are enriched in acidic residues.

The protein resides in the virion. This is an uncharacterized protein from Acanthamoeba polyphaga (Amoeba).